The primary structure comprises 667 residues: Beta-galactosidase LacA (667 aa).

Arginine 109 provides a ligand contact to substrate. Cysteine 113 contacts Zn(2+). Substrate is bound at residue asparagine 147. The active-site Proton donor is the glutamate 148. Positions 153, 155, and 158 each coordinate Zn(2+). The Nucleophile role is filled by glutamate 307. Substrate-binding positions include tryptophan 315 and 355–358; that span reads EKFH.

The protein belongs to the glycosyl hydrolase 42 family.

It catalyses the reaction Hydrolysis of terminal non-reducing beta-D-galactose residues in beta-D-galactosides.. In terms of biological role, hydrolyzes lactose, oNP-galactoside (oNPG), pNP-galactosidase (pNPG), pNP-mannoside, pNP-glucoside, pNP-fucoside, pNP-N-acetylglucosamide, but not pNP-arabinoside or 4-methylumbelliferyl-beta-galactopyranoside (MUG). Transgalactosylates lactose at 10 g/L, but not at 270 g/L. The protein is Beta-galactosidase LacA of Lactobacillus acidophilus.